Consider the following 260-residue polypeptide: Thrombin-like enzyme flavoxobin (260 aa).

A signal peptide spans methionine 1–alanine 18. Positions glutamine 19–leucine 24 are excised as a propeptide. A Peptidase S1 domain is found at valine 25 to alanine 251. Disulfide bonds link cysteine 31/cysteine 165, cysteine 52/cysteine 68, cysteine 100/cysteine 258, cysteine 144/cysteine 212, cysteine 176/cysteine 191, and cysteine 202/cysteine 227. Active-site charge relay system residues include histidine 67 and aspartate 112. Serine 206 (charge relay system) is an active-site residue.

It belongs to the peptidase S1 family. Snake venom subfamily. Monomer. In terms of tissue distribution, expressed by the venom gland.

The protein resides in the secreted. It carries out the reaction Selective cleavage of Arg-|-Xaa bond in fibrinogen, to form fibrin, and release fibrinopeptide A. The specificity of further degradation of fibrinogen varies with species origin of the enzyme.. Its activity is regulated as follows. Inhibited by alpha(2)-macroglobulin, diisopropylfluorophosphate (DFP) and PMSF. Low inhibition by tosyl-L-lysine chloromethyl ketone. Thrombin-like snake venom serine protease that clots fibrinogen (FGA) by releasing fibrinopeptide A. According to PubMed:8585090, only cleaves rabbit fibrinogen, whereas no specificity is described in PubMed:3910643 (tests done on bovine fibrinogen). Also acts as a C3 convertase that independently cleaves human C3 and kick-starts the complement cascade. Also increases urokinase-type plasminogen activator (PLAU) and plasminogen activator inhibitor (SERPINE1) in cultured bovine pulmonary artery endothelial cells. Dose-dependently inhibits collagen-induced platelet aggregation. The sequence is that of Thrombin-like enzyme flavoxobin (TLF1) from Protobothrops flavoviridis (Habu).